The sequence spans 410 residues: Tryptophan synthase beta chain (410 aa).

An N6-(pyridoxal phosphate)lysine modification is found at Lys-99.

This sequence belongs to the TrpB family. As to quaternary structure, tetramer of two alpha and two beta chains. Pyridoxal 5'-phosphate serves as cofactor.

It catalyses the reaction (1S,2R)-1-C-(indol-3-yl)glycerol 3-phosphate + L-serine = D-glyceraldehyde 3-phosphate + L-tryptophan + H2O. Its pathway is amino-acid biosynthesis; L-tryptophan biosynthesis; L-tryptophan from chorismate: step 5/5. Its function is as follows. The beta subunit is responsible for the synthesis of L-tryptophan from indole and L-serine. This chain is Tryptophan synthase beta chain, found in Pseudomonas fluorescens (strain Pf0-1).